The sequence spans 239 residues: mRNA turnover protein 4 homolog (239 aa).

The segment at Q216–S239 is disordered. A compositionally biased stretch (acidic residues) spans M218 to S239. Phosphoserine occurs at positions 225, 229, and 233.

This sequence belongs to the universal ribosomal protein uL10 family. As to quaternary structure, associates with the pre-60S ribosomal particle. Interacts with MINAS-60 (product of an alternative open reading frame of RBM10).

The protein localises to the nucleus. It is found in the nucleolus. Its subcellular location is the cytoplasm. Functionally, component of the ribosome assembly machinery. Nuclear paralog of the ribosomal protein P0, it binds pre-60S subunits at an early stage of assembly in the nucleolus, and is replaced by P0 in cytoplasmic pre-60S subunits and mature 80S ribosomes. This chain is mRNA turnover protein 4 homolog (Mrto4), found in Mus musculus (Mouse).